Here is a 335-residue protein sequence, read N- to C-terminus: Probable cytosolic iron-sulfur protein assembly protein Ciao1 (335 aa).

7 WD repeats span residues 12–51 (GHKG…WSTK), 57–96 (GHKR…FECN), 101–140 (GHEN…EFEC), 146–185 (PHTQ…NDWD), 192–231 (SHTS…NTAG), 250–289 (QHSR…KPDE), and 301–335 (AHDQ…KVSE).

Belongs to the WD repeat CIA1 family.

In terms of biological role, essential component of the cytosolic iron-sulfur (Fe/S) protein assembly machinery. Required for the maturation of extramitochondrial Fe/S proteins. The polypeptide is Probable cytosolic iron-sulfur protein assembly protein Ciao1 (Drosophila simulans (Fruit fly)).